The primary structure comprises 178 residues: Large ribosomal subunit protein uL6 (178 aa).

It belongs to the universal ribosomal protein uL6 family. Part of the 50S ribosomal subunit.

Its function is as follows. This protein binds to the 23S rRNA, and is important in its secondary structure. It is located near the subunit interface in the base of the L7/L12 stalk, and near the tRNA binding site of the peptidyltransferase center. This is Large ribosomal subunit protein uL6 from Francisella tularensis subsp. tularensis (strain FSC 198).